The following is a 467-amino-acid chain: 55 kDa erythrocyte membrane protein (467 aa).

Positions 73–154 constitute a PDZ domain; that stretch reads EVAFEKNQSE…VVTMKIIPRP (82 aa). Residues 160-230 enclose the SH3 domain; the sequence is PCEMYMRGQF…PSPELQEWRA (71 aa). The Guanylate kinase-like domain occupies 283–452; the sequence is RKTLVLIGAP…SVKIVEEALE (170 aa).

The protein belongs to the MAGUK family. In terms of processing, extensively palmitoylated.

It localises to the membrane. May play a role in the regulation of neutrophil polarization. The protein is 55 kDa erythrocyte membrane protein (mpp1) of Takifugu rubripes (Japanese pufferfish).